The primary structure comprises 529 residues: Mitochondrial inner membrane magnesium transporter MIT1 (529 aa).

Coiled-coil stretches lie at residues 336 to 388 (KIQL…LKNE) and 416 to 450 (LLET…LNLD). The chain crosses the membrane as a helical span at residues 456 to 476 (FILLNAKISFSTLFCSICAVI). At 477–492 (TSLFGMNLKNFIEHND) the chain is on the mitochondrial intermembrane side. Residues 493–513 (YAFFIVSIFITSWSIVGIYFT) form a helical membrane-spanning segment. Residues 514–529 (KNINTLLRFFDKYNVK) are Mitochondrial matrix-facing.

It belongs to the CorA metal ion transporter (MIT) (TC 1.A.35) family.

It localises to the mitochondrion inner membrane. Mitochondrial inner membrane magnesium transporter required for mitochondrial magnesium homeostasis. Involved in the development of the sporozoite in the mosquito vector midgut. In Plasmodium falciparum (isolate 3D7), this protein is Mitochondrial inner membrane magnesium transporter MIT1.